A 189-amino-acid chain; its full sequence is Probable chorismate pyruvate-lyase (189 aa).

The substrate site is built by R74, L113, and E175.

It belongs to the UbiC family.

The protein resides in the cytoplasm. It catalyses the reaction chorismate = 4-hydroxybenzoate + pyruvate. The protein operates within cofactor biosynthesis; ubiquinone biosynthesis. Removes the pyruvyl group from chorismate, with concomitant aromatization of the ring, to provide 4-hydroxybenzoate (4HB) for the ubiquinone pathway. The sequence is that of Probable chorismate pyruvate-lyase from Azoarcus sp. (strain BH72).